A 130-amino-acid chain; its full sequence is MARNRSSRTKKRKKLNIDRGVVHIKSTFNNTIITLSDLDGNTILWASGGTVGYSGSKKSTPYAAQLAADKIAKEALKLGLTRVSIEVKGPGAGREAAIRTIQAAGLVVDSIKDITPIPHNGCRPRRRRRV.

It belongs to the universal ribosomal protein uS11 family. As to quaternary structure, part of the 30S ribosomal subunit. Interacts with proteins S7 and S18. Binds to IF-3.

Its function is as follows. Located on the platform of the 30S subunit, it bridges several disparate RNA helices of the 16S rRNA. Forms part of the Shine-Dalgarno cleft in the 70S ribosome. The protein is Small ribosomal subunit protein uS11 of Kosmotoga olearia (strain ATCC BAA-1733 / DSM 21960 / TBF 19.5.1).